Here is a 164-residue protein sequence, read N- to C-terminus: 2S seed storage protein 3 (164 aa).

The signal sequence occupies residues 1 to 21 (MANKLFLVCATLALCFLLTNA). 2 propeptides span residues 22 to 37 (SIYRTVVEFEEDDASN) and 73 to 81 (GPSLDDEFD).

This sequence belongs to the 2S seed storage albumins family. The mature protein consists of a small and a large chain linked by disulfide bonds. Interacts with AHK2.

Its function is as follows. This is a 2S seed storage protein. This is 2S seed storage protein 3 (AT2S3) from Arabidopsis thaliana (Mouse-ear cress).